We begin with the raw amino-acid sequence, 4545 residues long: Prolow-density lipoprotein receptor-related protein 1 (4545 aa).

The N-terminal stretch at methionine 1–glycine 19 is a signal peptide. Residues alanine 20 to serine 4424 are Extracellular-facing. 2 consecutive LDL-receptor class A domains span residues threonine 27–proline 66 and arginine 72–arginine 110. Intrachain disulfides connect cysteine 28–cysteine 41, cysteine 35–cysteine 54, cysteine 48–cysteine 65, cysteine 73–cysteine 86, cysteine 80–cysteine 99, and cysteine 93–cysteine 109. Asparagine 115, asparagine 137, asparagine 186, asparagine 240, and asparagine 275 each carry an N-linked (GlcNAc...) asparagine glycan. LDL-receptor class B repeat units lie at residues glycine 293–methionine 335, glycine 336–serine 379, and arginine 380–tyrosine 423. Asparagine 358 carries N-linked (GlcNAc...) asparagine glycosylation. N-linked (GlcNAc...) asparagine glycosylation is present at asparagine 447. LDL-receptor class B repeat units follow at residues glycine 572 to glycine 614, aspartate 615 to asparagine 660, glycine 661 to alanine 711, and glycine 712 to tyrosine 755. An HAT 1 repeat occupies threonine 639–aspartate 671. Asparagine 730 carries an N-linked (GlcNAc...) asparagine glycan. 8 consecutive LDL-receptor class A domains span residues glutamine 854–histidine 892, threonine 895–serine 933, threonine 936–alanine 973, threonine 976–serine 1013, serine 1015–threonine 1053, glycine 1062–glutamate 1099, valine 1104–glutamate 1142, and alanine 1145–aspartate 1184. 24 disulfide bridges follow: cysteine 855/cysteine 867, cysteine 862/cysteine 880, cysteine 874/cysteine 891, cysteine 896/cysteine 908, cysteine 903/cysteine 921, cysteine 915/cysteine 932, cysteine 937/cysteine 949, cysteine 944/cysteine 962, cysteine 956/cysteine 972, cysteine 977/cysteine 990, cysteine 985/cysteine 1003, cysteine 997/cysteine 1012, cysteine 1016/cysteine 1028, cysteine 1023/cysteine 1041, cysteine 1035/cysteine 1052, cysteine 1063/cysteine 1076, cysteine 1070/cysteine 1089, cysteine 1083/cysteine 1098, cysteine 1105/cysteine 1119, cysteine 1113/cysteine 1132, cysteine 1126/cysteine 1141, cysteine 1146/cysteine 1160, cysteine 1153/cysteine 1173, and cysteine 1167/cysteine 1183. Residues tryptophan 872, aspartate 875, aspartate 877, aspartate 879, aspartate 885, and glutamate 886 each coordinate Ca(2+). The N-linked (GlcNAc...) asparagine glycan is linked to asparagine 929. Ca(2+)-binding residues include tryptophan 1033, aspartate 1036, aspartate 1038, aspartate 1040, aspartate 1046, and glutamate 1047. Asparagine 1051 carries an N-linked (GlcNAc...) asparagine glycan. Residues tryptophan 1081, aspartate 1084, aspartate 1086, aspartate 1088, aspartate 1094, and glutamate 1095 each contribute to the Ca(2+) site. Asparagine 1156 carries an N-linked (GlcNAc...) asparagine glycan. Asparagine 1196 and asparagine 1219 each carry an N-linked (GlcNAc...) asparagine glycan. LDL-receptor class B repeat units follow at residues serine 1310–alanine 1356, glycine 1357–aspartate 1399, glycine 1400–glutamate 1446, lysine 1447–glutamate 1491, and valine 1492–serine 1532. HAT repeat units follow at residues threonine 1380–arginine 1413 and methionine 1470–alanine 1503. 5 N-linked (GlcNAc...) asparagine glycosylation sites follow: asparagine 1512, asparagine 1559, asparagine 1576, asparagine 1617, and asparagine 1646. LDL-receptor class B repeat units lie at residues glutamine 1628–serine 1670, arginine 1671–arginine 1714, glycine 1715–glutamate 1754, and serine 1755–lysine 1799. Residues valine 1653 to glutamine 1684 form an HAT 4 repeat. N-linked (GlcNAc...) asparagine glycans are attached at residues asparagine 1724, asparagine 1734, asparagine 1764, asparagine 1826, and asparagine 1934. LDL-receptor class B repeat units follow at residues aspartate 1935–alanine 1977, glycine 1978–lysine 2020, glycine 2021–glycine 2064, and glycine 2065–phenylalanine 2108. Asparagine 1996 is a glycosylation site (N-linked (GlcNAc...) asparagine). An N6-acetyllysine modification is found at lysine 2010. N-linked (GlcNAc...) asparagine glycosylation is present at asparagine 2049. Asparagine 2118 and asparagine 2128 each carry an N-linked (GlcNAc...) asparagine glycan. LDL-receptor class B repeat units follow at residues asparagine 2254–tryptophan 2295, aspartate 2296–glutamine 2344, asparagine 2345–alanine 2389, glutamate 2390–histidine 2432, and isoleucine 2433–aspartate 2474. HAT repeat units lie at residues threonine 2277 to threonine 2309, threonine 2325 to serine 2358, and histidine 2411 to glutamine 2444. 3 N-linked (GlcNAc...) asparagine glycosylation sites follow: asparagine 2473, asparagine 2503, and asparagine 2522. LDL-receptor class A domains follow at residues serine 2524–asparagine 2563, arginine 2566–asparagine 2602, alanine 2605–serine 2641, asparagine 2639–proline 2690, arginine 2696–asparagine 2732, phenylalanine 2734–glutamate 2771, and threonine 2774–leucine 2814. Cystine bridges form between cysteine 2525/cysteine 2538, cysteine 2533/cysteine 2551, cysteine 2545/cysteine 2562, cysteine 2567/cysteine 2579, cysteine 2574/cysteine 2592, and cysteine 2586/cysteine 2601. Asparagine 2602 carries an N-linked (GlcNAc...) asparagine glycan. 15 cysteine pairs are disulfide-bonded: cysteine 2606–cysteine 2618, cysteine 2613–cysteine 2631, cysteine 2625–cysteine 2640, cysteine 2640–cysteine 2667, cysteine 2645–cysteine 2680, cysteine 2674–cysteine 2689, cysteine 2697–cysteine 2709, cysteine 2704–cysteine 2722, cysteine 2716–cysteine 2731, cysteine 2735–cysteine 2747, cysteine 2742–cysteine 2760, cysteine 2754–cysteine 2770, cysteine 2775–cysteine 2788, cysteine 2782–cysteine 2801, and cysteine 2795–cysteine 2813. Asparagine 2621 and asparagine 2639 each carry an N-linked (GlcNAc...) asparagine glycan. N-linked (GlcNAc...) asparagine glycosylation occurs at asparagine 2816. LDL-receptor class A domains are found at residues threonine 2818–glutamate 2855, threonine 2858–threonine 2899, and lysine 2904–histidine 2941. 11 disulfides stabilise this stretch: cysteine 2819–cysteine 2831, cysteine 2826–cysteine 2844, cysteine 2838–cysteine 2854, cysteine 2859–cysteine 2871, cysteine 2866–cysteine 2885, cysteine 2879–cysteine 2898, cysteine 2905–cysteine 2918, cysteine 2913–cysteine 2931, cysteine 2925–cysteine 2940, cysteine 2987–cysteine 2997, and cysteine 2993–cysteine 3006. Residue asparagine 2906 is glycosylated (N-linked (GlcNAc...) asparagine). Residues aspartate 2983–aspartate 3018 enclose the EGF-like 1; calcium-binding domain. N-linked (GlcNAc...) asparagine glycans are attached at residues asparagine 3049 and asparagine 3090. LDL-receptor class B repeat units follow at residues glutamine 3070–glycine 3114, glycine 3115–asparagine 3157, glycine 3158–threonine 3201, glutamate 3202–tyrosine 3244, and valine 3245–leucine 3285. HAT repeat units lie at residues glutamate 3128–isoleucine 3171 and arginine 3224–asparagine 3256. N-linked (GlcNAc...) asparagine glycosylation is found at asparagine 3265 and asparagine 3334. LDL-receptor class A domains lie at asparagine 3334–proline 3371, lysine 3374–aspartate 3410, valine 3413–proline 3450, threonine 3453–threonine 3491, threonine 3494–aspartate 3533, threonine 3536–threonine 3572, proline 3575–threonine 3611, arginine 3613–glycine 3649, threonine 3654–threonine 3692, glutamine 3695–glutamate 3733, and histidine 3741–serine 3778. Disulfide bonds link cysteine 3335–cysteine 3347, cysteine 3342–cysteine 3360, cysteine 3354–cysteine 3370, cysteine 3375–cysteine 3387, cysteine 3382–cysteine 3400, cysteine 3394–cysteine 3409, cysteine 3414–cysteine 3427, cysteine 3421–cysteine 3440, cysteine 3434–cysteine 3449, cysteine 3454–cysteine 3467, cysteine 3461–cysteine 3480, cysteine 3474–cysteine 3490, cysteine 3495–cysteine 3508, cysteine 3502–cysteine 3521, cysteine 3515–cysteine 3532, cysteine 3537–cysteine 3549, cysteine 3544–cysteine 3562, cysteine 3556–cysteine 3571, cysteine 3576–cysteine 3588, cysteine 3583–cysteine 3601, cysteine 3595–cysteine 3610, cysteine 3614–cysteine 3626, cysteine 3621–cysteine 3639, cysteine 3633–cysteine 3648, cysteine 3655–cysteine 3667, cysteine 3662–cysteine 3680, cysteine 3674–cysteine 3691, cysteine 3696–cysteine 3710, cysteine 3704–cysteine 3723, cysteine 3717–cysteine 3732, cysteine 3742–cysteine 3755, cysteine 3750–cysteine 3768, and cysteine 3762–cysteine 3777. Asparagine 3489 is a glycosylation site (N-linked (GlcNAc...) asparagine). Asparagine 3663 carries an N-linked (GlcNAc...) asparagine glycan. Asparagine 3789 and asparagine 3840 each carry an N-linked (GlcNAc...) asparagine glycan. The LDL-receptor class B 31 repeat unit spans residues glycine 3913 to isoleucine 3925. An N-linked (GlcNAc...) asparagine glycan is attached at asparagine 3954. 3 LDL-receptor class B repeats span residues glycine 3971–arginine 4013, glycine 4014–asparagine 4057, and glutamate 4058–tyrosine 4102. Residues threonine 3995–isoleucine 4027 form an HAT 10 repeat. Residues asparagine 4076, asparagine 4126, and asparagine 4180 are each glycosylated (N-linked (GlcNAc...) asparagine). EGF-like domains follow at residues arginine 4197 to aspartate 4230, glutamate 4233 to threonine 4269, glutamine 4270 to aspartate 4302, and glutamine 4305 to glutamate 4341. 10 disulfides stabilise this stretch: cysteine 4201–cysteine 4211, cysteine 4205–cysteine 4221, cysteine 4237–cysteine 4247, cysteine 4241–cysteine 4257, cysteine 4259–cysteine 4268, cysteine 4273–cysteine 4283, cysteine 4277–cysteine 4293, cysteine 4309–cysteine 4319, cysteine 4313–cysteine 4329, and cysteine 4331–cysteine 4340. The N-linked (GlcNAc...) asparagine glycan is linked to asparagine 4280. Asparagine 4365 carries N-linked (GlcNAc...) asparagine glycosylation. The region spanning leucine 4376–glutamate 4410 is the EGF-like 6 domain. Disulfide bonds link cysteine 4378/cysteine 4388, cysteine 4382/cysteine 4398, and cysteine 4400/cysteine 4409. A helical transmembrane segment spans residues isoleucine 4425–tyrosine 4445. Residues lysine 4446–alanine 4545 are Cytoplasmic-facing. Positions lysine 4446–alanine 4545 are interaction with MAFB. Threonine 4461 carries the phosphothreonine modification. A Phosphotyrosine modification is found at tyrosine 4508. Phosphoserine is present on residues serine 4518, serine 4521, and serine 4524.

The protein belongs to the LDLR family. As to quaternary structure, heterodimer of an 85-kDa membrane-bound carboxyl subunit and a non-covalently attached 515-kDa N-terminal subunit. Intracellular domain interacts with MAFB. Found in a complex with PID1/PCLI1, LRP1 and CUBNI. Interacts with SNX17, PID1/PCLI1, PDGF and CUBN. The intracellular domain interacts with SHC1, GULP1 and DAB1. Can weakly interact (via NPXY motif) with DAB2 (via PID domain); the interaction is enhanced by tyrosine phosphorylation of the NPXY motif. Interacts with MDK; promotes neuronal survival. Interacts with LRPAP1; this interaction is followed by rapid internalization. Interacts with uPA/PLAU and PAI1/SERPINE1, either individually or in complex with each other, leading to rapid endocytosis; this interaction is abolished in the presence of LRPAP1/RAP. Also interacts with tPA/PLAT alone or in complex with SERPINE1. Interacts with the urokinase receptor PLAUR; this interaction leads to PLAUR internalization and is impaired in the presence of SORL1. Interacts with PDGFB. Interacts with TAU/MAPT, leading to endocytosis; this interaction is reduced in the presence of LRPAP1/RAP. Interacts with IGFBP3. Interacts with ADGRG6. Post-translationally, cleaved into a 85 kDa membrane-spanning subunit (LRP-85) and a 515 kDa large extracellular domain (LRP-515) that remains non-covalently associated. Gamma-secretase-dependent cleavage of LRP-85 releases the intracellular domain from the membrane. In terms of processing, phosphorylated on serine and threonine residues. Phosphorylated on tyrosine residues upon stimulation with PDGF. Tyrosine phosphorylation promotes interaction with SHC1.

It localises to the cell membrane. It is found in the membrane. The protein localises to the coated pit. Its subcellular location is the golgi outpost. The protein resides in the cytoplasm. It localises to the cytoskeleton. It is found in the microtubule organizing center. The protein localises to the nucleus. Functionally, endocytic receptor involved in endocytosis and in phagocytosis of apoptotic cells. Required for early embryonic development. Involved in cellular lipid homeostasis. Involved in the plasma clearance of chylomicron remnants and activated LRPAP1 (alpha 2-macroglobulin), as well as the local metabolism of complexes between plasminogen activators and their endogenous inhibitors. Acts as an LRPAP1 alpha-2-macroglobulin receptor. Acts as a TAU/MAPT receptor and controls the endocytosis of TAU/MAPT as well as its subsequent spread. May modulate cellular events, such as APP metabolism, kinase-dependent intracellular signaling, neuronal calcium signaling as well as neurotransmission. Also acts as a receptor for IGFBP3 to mediate cell growth inhibition. The polypeptide is Prolow-density lipoprotein receptor-related protein 1 (Rattus norvegicus (Rat)).